A 718-amino-acid chain; its full sequence is MRLSLWNLLGLSGLVVASCPYMSGEDQEYHISHIQARGTDSEFLDQFKVEDSNSYLTTDAGGPIQDDASLKAGERGPTLLEDFIFRQKIQHFDHERVPERAVHARGAGAYGTFTSYADWTNITAASFLNSKGKETPVFVRFSTVAGSRGSADTVRDVHGFATRFYTDEGNFDIVGNNIPVFFIQDAILFPDLVHAVKPSPDSEIPQAATGHDSAWDFFSQQPSTLHTLFWAMSGHGIPRSYRHMDGFGVHTMRLVTDDGKSKLVKWHWKTKQGKASLVWEEAQILAGKNPDFHRQDLWDDINAGNGPEWELGVQIVDEEDVQAFGFDLLDPTKFLPEELVPVTILGKMKLTDNPTNYFAETEQVMFQPGHIVRGVDFSDDPLLQGRIYSYLDTQLNRNGGPNFEQLPVNRPRTKVHNNNRDGAGQMFIHTNKAPYSPNSLSGGNPKQANQTKGRGFFTAPSRKVVGSLHRGTASSFADVWSQPRMFYNSLIPSEQQFLVNAIRFEISQLKSDLIKKNTLMQLNRVSNDLATRVAAVIGYKPLDPSPEFYTNATTDYVTIFGKPLPSVVGFTVGILASTSSSTSISQAAQLATSFSSRGIRAVIVGESLLSGTDQTYSSADATAFDAVVVTMGAETLFGPVAKPNTLFPSGRPSQILHDAYRWGKPVGAVSKASVVLEPLPGTKNQGGVYRVESVNELATSIAKGLETFRFVDRFPLDS.

Active-site residues include histidine 103 and asparagine 176. A heme-binding site is contributed by tyrosine 390.

Belongs to the catalase family. Requires heme as cofactor.

It localises to the peroxisome matrix. It catalyses the reaction 2 H2O2 = O2 + 2 H2O. In terms of biological role, catalyzes the degradation of hydrogen peroxide (H(2)O(2)) generated by peroxisomal oxidases to water and oxygen, thereby protecting cells from the toxic effects of hydrogen peroxide. The sequence is that of Catalase (CAT1) from Blumeria hordei (Barley powdery mildew).